The chain runs to 123 residues: Small ribosomal subunit protein uS12 (123 aa).

Asp89 bears the 3-methylthioaspartic acid mark. The disordered stretch occupies residues 100 to 123; it reads GSLDTSGVKGRNQGRSKYGTKKPK. Residues 111 to 123 show a composition bias toward basic residues; that stretch reads NQGRSKYGTKKPK.

The protein belongs to the universal ribosomal protein uS12 family. In terms of assembly, part of the 30S ribosomal subunit. Contacts proteins S8 and S17. May interact with IF1 in the 30S initiation complex.

Its function is as follows. With S4 and S5 plays an important role in translational accuracy. In terms of biological role, interacts with and stabilizes bases of the 16S rRNA that are involved in tRNA selection in the A site and with the mRNA backbone. Located at the interface of the 30S and 50S subunits, it traverses the body of the 30S subunit contacting proteins on the other side and probably holding the rRNA structure together. The combined cluster of proteins S8, S12 and S17 appears to hold together the shoulder and platform of the 30S subunit. The polypeptide is Small ribosomal subunit protein uS12 (Pseudomonas syringae pv. syringae (strain B728a)).